Consider the following 346-residue polypeptide: Enkurin domain-containing protein 1 (346 aa).

The disordered stretch occupies residues 1–35 (MCEGPSRISGPIPPDPTLCPDNYRRPTSAQGRLEG). Phosphoserine is present on serine 91. The tract at residues 91–171 (SLKRKDPKDH…AHFLRAHSRC (81 aa)) is required for binding to microtubules. Positions 114–125 (RFREQERSREQG) are enriched in basic and acidic residues. Disordered stretches follow at residues 114–137 (RFRE…WRSP), 167–197 (AHSR…EPGL), and 260–280 (AEAR…TRMP). Serine 136 carries the phosphoserine modification. Over residues 174-190 (GLPPPHVSSPQPTPPGP) the composition is skewed to pro residues. The 93-residue stretch at 251–343 (ERRDLWRREA…IFSRPKVFVK (93 aa)) folds into the Enkurin domain.

In terms of assembly, interacts with alpha-tubulin. Interacts (via central region) with CCP110 (via N-terminal region); competes with CEP97 for binding to CCP110.

It localises to the cytoplasm. The protein resides in the cytoskeleton. Its subcellular location is the microtubule organizing center. It is found in the centrosome. The protein localises to the centriole. It localises to the cilium basal body. The protein resides in the cell projection. Its subcellular location is the cilium. It is found in the spindle. The protein localises to the spindle pole. It localises to the cilium axoneme. Microtubule-binding protein which regulates microtubule organization and stability. Promotes the stability of astral microtubules and facilitates the proper orientation of the mitotic spindle. This allows the oriented division of basal keratinocytes and contributes to epidermal stratification. Required for the assembly of both primary and motile cilia. Destabilizes the interaction between CCP110 and CEP97 by competing with CEP97 for binding to CCP110 which promotes the removal of CCP110 and CEP97 from the mother centriole and allows the initiation of ciliogenesis. The polypeptide is Enkurin domain-containing protein 1 (ENKD1) (Homo sapiens (Human)).